Consider the following 333-residue polypeptide: Mitochondrial fission regulator 1 (333 aa).

Ser119 is subject to Phosphoserine. Positions 286 to 307 are enriched in basic and acidic residues; the sequence is YRSDSQDEVEKGVPKSESEATS. Residues 286-315 are disordered; the sequence is YRSDSQDEVEKGVPKSESEATSERVLFGPH.

This sequence belongs to the MTFR1 family.

The protein localises to the mitochondrion. In terms of biological role, may play a role in mitochondrial aerobic respiration. May also regulate mitochondrial organization and fission. In Pongo abelii (Sumatran orangutan), this protein is Mitochondrial fission regulator 1 (MTFR1).